The sequence spans 299 residues: NEDD8-activating enzyme E1 catalytic subunit (299 aa).

12–37 contacts ATP; that stretch reads GLGCEILKNLTMLSFVKQVHIVDIDT. The Glycyl thioester intermediate role is filled by Cys168.

This sequence belongs to the ubiquitin-activating E1 family. UBA3 subfamily. As to quaternary structure, heterodimer of UBA3 and ULA1. Interacts with NEDD8 and UBC12.

It catalyses the reaction ATP + [NEDD8 protein] + [E1 NEDD8-activating enzyme]-L-cysteine = AMP + diphosphate + [E1 NEDD8-activating enzyme]-S-[NEDD8 protein]-yl-L-cysteine.. It functions in the pathway protein modification; protein neddylation. Catalytic subunit of the dimeric UBA3-ULA1 E1 enzyme. E1 activates NEDD8/RUB1 by first adenylating its C-terminal glycine residue with ATP, thereafter linking this residue to the side chain of the catalytic cysteine, yielding a NEDD8-UBA3 thioester and free AMP. E1 finally transfers NEDD8 to the catalytic cysteine of UBC12. This chain is NEDD8-activating enzyme E1 catalytic subunit (UBA3), found in Saccharomyces cerevisiae (strain ATCC 204508 / S288c) (Baker's yeast).